Here is a 348-residue protein sequence, read N- to C-terminus: Small ribosomal subunit biogenesis GTPase RsgA (348 aa).

The span at 1 to 14 (MAKRKLSKQQKWRI) shows a compositional bias: basic residues. Positions 1–39 (MAKRKLSKQQKWRIQKIQDERTKRATRKETQLESQLSGG) are disordered. Residues 16–31 (KIQDERTKRATRKETQ) are compositionally biased toward basic and acidic residues. In terms of domain architecture, CP-type G spans 116–275 (FGQLKPIAAN…LIDSPGIREF (160 aa)). Residues 163–166 (NKQD) and 217–225 (GQSGVGKSS) each bind GTP. Zn(2+) contacts are provided by C299, C304, H306, and C312.

This sequence belongs to the TRAFAC class YlqF/YawG GTPase family. RsgA subfamily. Monomer. Associates with 30S ribosomal subunit, binds 16S rRNA. The cofactor is Zn(2+).

It is found in the cytoplasm. In terms of biological role, one of several proteins that assist in the late maturation steps of the functional core of the 30S ribosomal subunit. Helps release RbfA from mature subunits. May play a role in the assembly of ribosomal proteins into the subunit. Circularly permuted GTPase that catalyzes slow GTP hydrolysis, GTPase activity is stimulated by the 30S ribosomal subunit. The sequence is that of Small ribosomal subunit biogenesis GTPase RsgA from Hahella chejuensis (strain KCTC 2396).